The sequence spans 215 residues: Large ribosomal subunit protein uL3 (215 aa).

Residues 136-155 (GVSISHRSHGSTGQRQDPGK) are disordered. Glutamine 151 is modified (N5-methylglutamine).

It belongs to the universal ribosomal protein uL3 family. As to quaternary structure, part of the 50S ribosomal subunit. Forms a cluster with proteins L14 and L19. Post-translationally, methylated by PrmB.

Its function is as follows. One of the primary rRNA binding proteins, it binds directly near the 3'-end of the 23S rRNA, where it nucleates assembly of the 50S subunit. This Rickettsia felis (strain ATCC VR-1525 / URRWXCal2) (Rickettsia azadi) protein is Large ribosomal subunit protein uL3.